The chain runs to 763 residues: DEK domain-containing chromatin-associated protein 3 (763 aa).

2 disordered regions span residues Met1 to Lys324 and Thr458 to Val681. The span at Pro11–Glu20 shows a compositional bias: polar residues. Composition is skewed to basic and acidic residues over residues Ala32–Glu44, Ser72–Gly97, Thr124–Gly172, and Asp180–Asp242. Positions Lys60–Glu96 form a coiled coil. The stretch at Gly214–Arg286 forms a coiled coil. Acidic residues predominate over residues Glu243–Asp252. Residues Asn253 to Asp264 show a composition bias toward basic and acidic residues. The segment covering Glu265–Lys277 has biased composition (acidic residues). The Nuclear localization signal 1 motif lies at Lys284–Ser291. Residues Lys295–Pro311 show a composition bias toward basic and acidic residues. Over residues Lys475–Lys484 the composition is skewed to basic residues. Residues Pro483–Ala490 carry the Nuclear localization signal 2 motif. A compositionally biased stretch (low complexity) spans Lys485 to Lys496. Residues Lys513 to Asn551 adopt a coiled-coil conformation. A compositionally biased stretch (acidic residues) spans Asp521–Gln533. Basic and acidic residues predominate over residues Glu534–Glu547. Residues Ser557–Glu578 show a composition bias toward acidic residues. Low complexity-rich tracts occupy residues Ala606 to Pro615 and Pro650 to Ser660. A compositionally biased stretch (basic and acidic residues) spans Ala661–Val681. Residues Lys676–Thr731 enclose the DEK-C domain. DNA-binding regions lie at residues Asp694 to Ala708 and Lys723 to Gln727. The stretch at Lys723 to Gly753 forms a coiled coil. The segment at Leu730–Ala763 is disordered. Residues Gly753–Ala763 are compositionally biased toward gly residues.

In terms of assembly, found in a mRNA splicing-dependent exon junction complex (EJC). Binds specifically histones H3 and H4. Interacts with TOP1A, SCC3, At1g61730, At1g20940, At1g13930, DEK4, HDT1, NIT1, SHL, CYP19-1, GEBPL, HSP70-3, PDP2, PDP3, KIN2, RPL11A and PDS5A. In terms of tissue distribution, highly expressed in young seedlings.

It localises to the nucleus. Its subcellular location is the nucleolus. Functionally, chromatin-associated protein which contributes to the modulation of chromatin structure (such as super-helical structure of DNA) and function. Binds to chromatin of protein-coding genes throughout the genome to regulate nucleosome occupancy and chromatin accessibility, and to modulate the expression of target genes. Negative regulator of stress tolerance (e.g. high salt). This Arabidopsis thaliana (Mouse-ear cress) protein is DEK domain-containing chromatin-associated protein 3.